Here is a 118-residue protein sequence, read N- to C-terminus: Autophagy-related protein 8 (118 aa).

Gly116 carries Phosphatidylethanolamine amidated glycine lipidation. The propeptide at 117 to 118 (EA) is removed in mature form.

Belongs to the ATG8 family. As to quaternary structure, conjugation to phosphatidylethanolamine (PE) leads to homodimerization. Interacts with ATG1, ATG3, ATG4, ATG7 and ATG12. Post-translationally, the C-terminal Glu-117 and Ala-118 residues of ATG8 are removed by ATG4 to expose Gly-116 at the C-terminus. This Gly-116 forms then a thioester bond with the 'Cys-550' of ATG7 (E1-like activating enzyme) before being transferred to the 'Cys-244' of ATG3 (the specific E2 conjugating enzyme), in order to be finally amidated with phosphatidylethanolamine. This lipid modification anchors ATG8 to membranes and can be reversed by ATG4, releasing soluble ATG8.

Its subcellular location is the cytoplasmic vesicle. It localises to the cvt vesicle membrane. It is found in the autophagosome membrane. The protein localises to the vacuole membrane. Functionally, ubiquitin-like modifier involved in cytoplasm to vacuole transport (Cvt) vesicles and autophagosome formation. With ATG4, mediates the delivery of the vesicles and autophagosomes to the vacuole via the microtubule cytoskeleton. Required for selective autophagic degradation of the nucleus (nucleophagy) as well as for mitophagy which contributes to regulate mitochondrial quantity and quality by eliminating the mitochondria to a basal level to fulfill cellular energy requirements and preventing excess ROS production. Also participates in membrane fusion events that take place in the early secretory pathway. Also involved in endoplasmic reticulum-specific autophagic process and is essential for the survival of cells subjected to severe ER stress. The ATG8-PE conjugate mediates tethering between adjacent membranes and stimulates membrane hemifusion, leading to expansion of the autophagosomal membrane during autophagy. Moreover not only conjugation, but also subsequent ATG8-PE deconjugation is an important step required to facilitate multiple events during macroautophagy, and especially for efficient autophagosome biogenesis, the assembly of ATG9-containing tubulovesicular clusters into phagophores/autophagosomes, and for the disassembly of PAS-associated ATG components. Autophagy is required for proper vegetative growth, asexual/sexual reproduction, and full virulence. Autophagy is particularly involved in the biosynthesis of deoxynivalenol (DON), an important virulence determinant. The polypeptide is Autophagy-related protein 8 (Gibberella zeae (strain ATCC MYA-4620 / CBS 123657 / FGSC 9075 / NRRL 31084 / PH-1) (Wheat head blight fungus)).